The sequence spans 115 residues: MGTRLLGCAALCLLAADSFHAKVTQTPGHLVKGKGQKTKMDCTPEKGHTFVYWYQQNQNKEFMLLISFQNEQVLQETEMHKKRFSSQCPKNAPCSLAILSSEPGDTALYLCASSQ.

Positions 1 to 21 are cleaved as a signal peptide; it reads MGTRLLGCAALCLLAADSFHA. In terms of domain architecture, Ig-like spans 22-115; that stretch reads KVTQTPGHLV…TALYLCASSQ (94 aa). A disulfide bridge connects residues Cys-42 and Cys-111.

In terms of assembly, alpha-beta TR is a heterodimer composed of an alpha and beta chain; disulfide-linked. The alpha-beta TR is associated with the transmembrane signaling CD3 coreceptor proteins to form the TR-CD3 (TcR or TCR). The assembly of alpha-beta TR heterodimers with CD3 occurs in the endoplasmic reticulum where a single alpha-beta TR heterodimer associates with one CD3D-CD3E heterodimer, one CD3G-CD3E heterodimer and one CD247 homodimer forming a stable octameric structure. CD3D-CD3E and CD3G-CD3E heterodimers preferentially associate with TR alpha and TR beta chains, respectively. The association of the CD247 homodimer is the last step of TcR assembly in the endoplasmic reticulum and is required for transport to the cell surface.

The protein resides in the cell membrane. Functionally, probable non-functional open reading frame (ORF) of V region of the variable domain of T cell receptor (TR) beta chain. Non-functional ORF generally cannot participate in the synthesis of a productive T cell receptor (TR) chain due to altered V-(D)-J or switch recombination and/or splicing site (at mRNA level) and/or conserved amino acid change (protein level). Alpha-beta T cell receptors are antigen specific receptors which are essential to the immune response and are present on the cell surface of T lymphocytes. Recognize peptide-major histocompatibility (MH) (pMH) complexes that are displayed by antigen presenting cells (APC), a prerequisite for efficient T cell adaptive immunity against pathogens. Binding of alpha-beta TR to pMH complex initiates TR-CD3 clustering on the cell surface and intracellular activation of LCK that phosphorylates the ITAM motifs of CD3G, CD3D, CD3E and CD247 enabling the recruitment of ZAP70. In turn ZAP70 phosphorylates LAT, which recruits numerous signaling molecules to form the LAT signalosome. The LAT signalosome propagates signal branching to three major signaling pathways, the calcium, the mitogen-activated protein kinase (MAPK) kinase and the nuclear factor NF-kappa-B (NF-kB) pathways, leading to the mobilization of transcription factors that are critical for gene expression and essential for T cell growth and differentiation. The T cell repertoire is generated in the thymus, by V-(D)-J rearrangement. This repertoire is then shaped by intrathymic selection events to generate a peripheral T cell pool of self-MH restricted, non-autoaggressive T cells. Post-thymic interaction of alpha-beta TR with the pMH complexes shapes TR structural and functional avidity. In Homo sapiens (Human), this protein is Probable non-functional T cell receptor beta variable 23-1.